The sequence spans 172 residues: GTP-dependent dephospho-CoA kinase (172 aa).

GTP contacts are provided by D49, V50, V51, D68, K70, and E120.

It belongs to the GTP-dependent DPCK family.

It carries out the reaction 3'-dephospho-CoA + GTP = GDP + CoA + H(+). The protein operates within cofactor biosynthesis; coenzyme A biosynthesis. In terms of biological role, catalyzes the GTP-dependent phosphorylation of the 3'-hydroxyl group of dephosphocoenzyme A to form coenzyme A (CoA). The sequence is that of GTP-dependent dephospho-CoA kinase from Pyrobaculum arsenaticum (strain DSM 13514 / JCM 11321 / PZ6).